Reading from the N-terminus, the 83-residue chain is Large ribosomal subunit protein uL23 (83 aa).

This sequence belongs to the universal ribosomal protein uL23 family. Part of the 50S ribosomal subunit. Contacts protein L29.

Binds to 23S rRNA. One of the proteins that surrounds the polypeptide exit tunnel on the outside of the ribosome. The chain is Large ribosomal subunit protein uL23 from Archaeoglobus fulgidus (strain ATCC 49558 / DSM 4304 / JCM 9628 / NBRC 100126 / VC-16).